The chain runs to 24 residues: Arginine attenuator peptide (24 aa).

This sequence belongs to the arginine attenuator peptide family.

Functionally, arginine attenuator peptide (AAP) that has a regulatory role in the production of arginine-specific carbamoyl phosphate synthetase. Encoded by an upstream open reading frame (uORF) within the 5'-leader region of arginine-specific carbamoyl phosphate synthetase small chain (arg-2) mRNA, it attenuates the translation of the downstream arg-2 ORF. In the presence of high concentrations of arginine, ribosomes translating the uORF encoding AAP stall at the termination codon, resulting in reduced translation from the downstream arg-2 initiation codon. In Neurospora crassa (strain ATCC 24698 / 74-OR23-1A / CBS 708.71 / DSM 1257 / FGSC 987), this protein is Arginine attenuator peptide.